The following is a 570-amino-acid chain: Urease subunit alpha (570 aa).

The region spanning 131–570 (GGMDSHIHFI…LPMAQRYFLF (440 aa)) is the Urease domain. Ni(2+) contacts are provided by histidine 136, histidine 138, and lysine 219. At lysine 219 the chain carries N6-carboxylysine. Substrate is bound at residue histidine 221. Ni(2+)-binding residues include histidine 248 and histidine 274. Histidine 322 serves as the catalytic Proton donor. Position 362 (aspartate 362) interacts with Ni(2+).

Belongs to the metallo-dependent hydrolases superfamily. Urease alpha subunit family. In terms of assembly, heterotrimer of UreA (gamma), UreB (beta) and UreC (alpha) subunits. Three heterotrimers associate to form the active enzyme. Ni cation serves as cofactor. In terms of processing, carboxylation allows a single lysine to coordinate two nickel ions.

It is found in the cytoplasm. It carries out the reaction urea + 2 H2O + H(+) = hydrogencarbonate + 2 NH4(+). Its pathway is nitrogen metabolism; urea degradation; CO(2) and NH(3) from urea (urease route): step 1/1. This Rhizobium leguminosarum bv. trifolii (strain WSM2304) protein is Urease subunit alpha.